The following is a 507-amino-acid chain: ATP synthase subunit alpha, chloroplastic (507 aa).

170–177 (GDRQTGKT) serves as a coordination point for ATP.

It belongs to the ATPase alpha/beta chains family. F-type ATPases have 2 components, CF(1) - the catalytic core - and CF(0) - the membrane proton channel. CF(1) has five subunits: alpha(3), beta(3), gamma(1), delta(1), epsilon(1). CF(0) has four main subunits: a, b, b' and c.

It is found in the plastid. The protein localises to the chloroplast thylakoid membrane. The enzyme catalyses ATP + H2O + 4 H(+)(in) = ADP + phosphate + 5 H(+)(out). Its function is as follows. Produces ATP from ADP in the presence of a proton gradient across the membrane. The alpha chain is a regulatory subunit. In Phalaenopsis aphrodite subsp. formosana (Moth orchid), this protein is ATP synthase subunit alpha, chloroplastic.